The primary structure comprises 153 residues: SsrA-binding protein (153 aa).

This sequence belongs to the SmpB family.

It localises to the cytoplasm. In terms of biological role, required for rescue of stalled ribosomes mediated by trans-translation. Binds to transfer-messenger RNA (tmRNA), required for stable association of tmRNA with ribosomes. tmRNA and SmpB together mimic tRNA shape, replacing the anticodon stem-loop with SmpB. tmRNA is encoded by the ssrA gene; the 2 termini fold to resemble tRNA(Ala) and it encodes a 'tag peptide', a short internal open reading frame. During trans-translation Ala-aminoacylated tmRNA acts like a tRNA, entering the A-site of stalled ribosomes, displacing the stalled mRNA. The ribosome then switches to translate the ORF on the tmRNA; the nascent peptide is terminated with the 'tag peptide' encoded by the tmRNA and targeted for degradation. The ribosome is freed to recommence translation, which seems to be the essential function of trans-translation. This is SsrA-binding protein from Lactobacillus delbrueckii subsp. bulgaricus (strain ATCC 11842 / DSM 20081 / BCRC 10696 / JCM 1002 / NBRC 13953 / NCIMB 11778 / NCTC 12712 / WDCM 00102 / Lb 14).